The chain runs to 959 residues: MTDMTLLNALSDDQDFAGRHNGPNAAQQNIMLKAISAESVEQLIAQTVPADIRLPEPMKLDPAQSEADMLTSLKAIASKNIINRSYIGQGYYNNLTPNVVLRNVLENPGWYTAYTPYQPEISQGRLESLLNYQQMIMDLTSMELANASLLDEATAAAEAMTLCLRAGKSKSKAFFVSNDLHPQTVDVVRTRAEYIGIEIITGSVEELDNHDVFGALVQYPGTTGSITDLTDIIEKAHAKKTLVAVASDLLALTLLKAPGEMGADVVIGSAQRFGVPMGFGGPHAGFMATKDKHKRTMPGRVIGVSKDARGNQSLRMAMQTREQHIRREKATSNICTAQALLANMAAFYALYHGPEGLRKIGRRVHHLTAILAAGLRNSGIELASDTFFDTITLNTGKKTDDFYKKALAAGINLRKFDVQLGISLDETTKVSDVEELLAIFTGNKLKASMFTADIAADEFAAIPESCRRTSKYLTHPVFNEHHSETQMMRYMKKLENKDYSLTHGMIPLGSCTMKLNAAAEMIPITWPEFGSLHPFAPADQTKGYQELASKLSEMLCSVTGYDAFSLQPNSGAQGEYAGLIAIQRYHQHNGDSHRNVCLIPSSAHGTNPASAAMVSMKVVVVGCDEKGNVDVEDLKVKIEKHRDNLSCIMITYPSTHGVYEEAVREVCDLVHDAGGQVYLDGANMNAQVGLTNPGFIGSDVSHLNLHKTFCIPHGGGGPGMGPIGVKSHLAPFLPGHVQSTSDEGQQYAVSAAELGSASILPISYAYIAMMGEEGLTEATKLAILNANYVMERLRPHYPVLYRGTEGRIAHECIIDIRPLKEASGISEEDVAKRLMDYGFHAPTMSFPVAGTLMIEPTESEDLAELDRFCDAMIAIRQEIARVQEGEWPIDDNPLVHAPHTQADLMETEWNRAYSREIACFPTDHTRASKYWPTVNRVDNVFGDRNLICSCPSIDSYIED.

N6-(pyridoxal phosphate)lysine is present on lysine 707.

The protein belongs to the GcvP family. As to quaternary structure, the glycine cleavage system is composed of four proteins: P, T, L and H. Pyridoxal 5'-phosphate is required as a cofactor.

The catalysed reaction is N(6)-[(R)-lipoyl]-L-lysyl-[glycine-cleavage complex H protein] + glycine + H(+) = N(6)-[(R)-S(8)-aminomethyldihydrolipoyl]-L-lysyl-[glycine-cleavage complex H protein] + CO2. Functionally, the glycine cleavage system catalyzes the degradation of glycine. The P protein binds the alpha-amino group of glycine through its pyridoxal phosphate cofactor; CO(2) is released and the remaining methylamine moiety is then transferred to the lipoamide cofactor of the H protein. In Photobacterium profundum (strain SS9), this protein is Glycine dehydrogenase (decarboxylating).